The sequence spans 338 residues: Tryptophan--tRNA ligase (338 aa).

Residues 11–13 (QPS) and 19–20 (GN) each bind ATP. Residues 12 to 20 (PSGELSIGN) carry the 'HIGH' region motif. Residue D135 coordinates L-tryptophan. Residues 147-149 (GSD), V189, and 198-202 (KMSKS) contribute to the ATP site. The short motif at 198 to 202 (KMSKS) is the 'KMSKS' region element.

The protein belongs to the class-I aminoacyl-tRNA synthetase family. Homodimer.

Its subcellular location is the cytoplasm. The enzyme catalyses tRNA(Trp) + L-tryptophan + ATP = L-tryptophyl-tRNA(Trp) + AMP + diphosphate + H(+). In terms of biological role, catalyzes the attachment of tryptophan to tRNA(Trp). In Vibrio vulnificus (strain CMCP6), this protein is Tryptophan--tRNA ligase.